Here is a 182-residue protein sequence, read N- to C-terminus: UPF0397 protein BCE_2667 (182 aa).

The next 5 helical transmembrane spans lie at 9–29 (VVAI…GFSI), 40–60 (AILT…IGLI), 71–91 (WGIW…MGLI), 114–134 (ITGL…DIIV), and 142–162 (IVIQ…VLGL).

Belongs to the UPF0397 family.

It is found in the cell membrane. The protein is UPF0397 protein BCE_2667 of Bacillus cereus (strain ATCC 10987 / NRS 248).